The chain runs to 472 residues: RING-H2 finger protein ATL13 (472 aa).

A helical transmembrane segment spans residues 51–71 (ILLIIIILSIIFFISGLLHLL). The RING-type; atypical zinc-finger motif lies at 134–176 (CAVCLCEFETEDKLRLLPKCSHAFHMDCIDTWLLSHSTCPLCR). Residues 320-340 (VSTKKQSSKNRGLPGHRTAMS) are disordered.

This sequence belongs to the RING-type zinc finger family. ATL subfamily.

The protein resides in the membrane. The catalysed reaction is S-ubiquitinyl-[E2 ubiquitin-conjugating enzyme]-L-cysteine + [acceptor protein]-L-lysine = [E2 ubiquitin-conjugating enzyme]-L-cysteine + N(6)-ubiquitinyl-[acceptor protein]-L-lysine.. Its pathway is protein modification; protein ubiquitination. This chain is RING-H2 finger protein ATL13 (ATL13), found in Arabidopsis thaliana (Mouse-ear cress).